A 218-amino-acid chain; its full sequence is Redox-sensing transcriptional repressor Rex (218 aa).

The segment at residues 25–64 (WYLSYVQLLHADGCESVSSTRIARAVGVDASLVAKDLSYV) is a DNA-binding region (H-T-H motif). 99–104 (GVGSLG) is an NAD(+) binding site.

It belongs to the transcriptional regulatory Rex family. Homodimer.

Its subcellular location is the cytoplasm. Modulates transcription in response to changes in cellular NADH/NAD(+) redox state. This chain is Redox-sensing transcriptional repressor Rex, found in Porphyromonas gingivalis (strain ATCC BAA-308 / W83).